Reading from the N-terminus, the 807-residue chain is Phenylalanine--tRNA ligase beta subunit (807 aa).

The tRNA-binding domain maps to Ser-39 to Ala-153. Residues Ala-407–Ala-491 enclose the B5 domain. Mg(2+) is bound by residues Asp-469, Asp-475, Glu-478, and Glu-479. An FDX-ACB domain is found at Pro-713–Arg-806.

The protein belongs to the phenylalanyl-tRNA synthetase beta subunit family. Type 1 subfamily. Tetramer of two alpha and two beta subunits. Requires Mg(2+) as cofactor.

It is found in the cytoplasm. It carries out the reaction tRNA(Phe) + L-phenylalanine + ATP = L-phenylalanyl-tRNA(Phe) + AMP + diphosphate + H(+). The polypeptide is Phenylalanine--tRNA ligase beta subunit (Synechococcus sp. (strain CC9605)).